A 273-amino-acid polypeptide reads, in one-letter code: Phosphatidylglycerol--prolipoprotein diacylglyceryl transferase (273 aa).

Transmembrane regions (helical) follow at residues 18-38, 47-67, 89-109, and 116-136; these read IPVR…YVVG, LPED…IICA, IWNG…TAYI, and VSFL…QIIG. Arginine 137 contributes to the a 1,2-diacyl-sn-glycero-3-phospho-(1'-sn-glycerol) binding site. 3 helical membrane passes run 178–198, 207–227, and 238–258; these read VHPT…ILLI, GEIF…IEGM, and LRSA…AIIY.

Belongs to the Lgt family.

It localises to the cell membrane. It catalyses the reaction L-cysteinyl-[prolipoprotein] + a 1,2-diacyl-sn-glycero-3-phospho-(1'-sn-glycerol) = an S-1,2-diacyl-sn-glyceryl-L-cysteinyl-[prolipoprotein] + sn-glycerol 1-phosphate + H(+). The protein operates within protein modification; lipoprotein biosynthesis (diacylglyceryl transfer). Catalyzes the transfer of the diacylglyceryl group from phosphatidylglycerol to the sulfhydryl group of the N-terminal cysteine of a prolipoprotein, the first step in the formation of mature lipoproteins. The sequence is that of Phosphatidylglycerol--prolipoprotein diacylglyceryl transferase from Lysinibacillus sphaericus (strain C3-41).